Reading from the N-terminus, the 104-residue chain is Large ribosomal subunit protein bL21 (104 aa).

This sequence belongs to the bacterial ribosomal protein bL21 family. Part of the 50S ribosomal subunit. Contacts protein L20.

This protein binds to 23S rRNA in the presence of protein L20. This Streptococcus pyogenes serotype M1 protein is Large ribosomal subunit protein bL21.